Reading from the N-terminus, the 121-residue chain is MARISSTQPRKQRKFRYNAPIHTRGAFLHSPLASDLREKYGKRSFRVVTGDTVKVLRGEFKGIEGVVDGVDVKNTKVLVHGVYVKKANGEDVPRPLDPSKIMITKLNTKDAVRVARLEVKA.

Belongs to the universal ribosomal protein uL24 family. Part of the 50S ribosomal subunit.

In terms of biological role, one of two assembly initiator proteins, it binds directly to the 5'-end of the 23S rRNA, where it nucleates assembly of the 50S subunit. Located at the polypeptide exit tunnel on the outside of the subunit. The sequence is that of Large ribosomal subunit protein uL24 from Methanocorpusculum labreanum (strain ATCC 43576 / DSM 4855 / Z).